Reading from the N-terminus, the 284-residue chain is D-tagatose-1,6-bisphosphate aldolase subunit GatY (284 aa).

Residue aspartate 82 is the Proton donor of the active site. Histidine 83 and histidine 180 together coordinate Zn(2+). Residue glycine 181 participates in dihydroxyacetone phosphate binding. Histidine 208 contacts Zn(2+). Dihydroxyacetone phosphate-binding positions include 209-211 and 230-233; these read GAS and NVAT.

Belongs to the class II fructose-bisphosphate aldolase family. TagBP aldolase GatY subfamily. In terms of assembly, forms a complex with GatZ. The cofactor is Zn(2+).

It carries out the reaction D-tagatofuranose 1,6-bisphosphate = D-glyceraldehyde 3-phosphate + dihydroxyacetone phosphate. The protein operates within carbohydrate metabolism; D-tagatose 6-phosphate degradation; D-glyceraldehyde 3-phosphate and glycerone phosphate from D-tagatose 6-phosphate: step 2/2. Catalytic subunit of the tagatose-1,6-bisphosphate aldolase GatYZ, which catalyzes the reversible aldol condensation of dihydroxyacetone phosphate (DHAP or glycerone-phosphate) with glyceraldehyde 3-phosphate (G3P) to produce tagatose 1,6-bisphosphate (TBP). Requires GatZ subunit for full activity and stability. Is involved in the catabolism of galactitol. This Escherichia coli O7:K1 (strain IAI39 / ExPEC) protein is D-tagatose-1,6-bisphosphate aldolase subunit GatY.